Consider the following 517-residue polypeptide: MTASEERLAALTSWHADWSGLRVVVYGLGVTGFSVADTLAELGASVLVVASRADHERAMLLDVIGAELLLQADLSAPPERLTAFGPELIVVSPGFHADHPLLLWADQQGIPVWGDIELAWRLRDKTAPPGSGNSPADWICVTGTNGKTTTVQLTATMLLAGGSRVAPCGNIGVAVLDAIRDPQGFDVLVVELSSYQLHWINRNAGGEVSPYAAACLNIADDHLDWHGSLEAYAAAKAKVYENAQVACVYNRADEATLRMVEETEVVEGARAIGFGLDVPGPSDFGIVDGILCDRAFLDDRLHSAIELTTLEELREAGLAAPHIVANILAASALARAYGVEPWVVRDVLSAFRLDAHRIELVRIEAGVSWVDDSKATNPHAADASLRAYPSVVWVVGGLFKGVDLDGLVKRHAARLRGAVLIGADRDLLRSAFQRHAPGLPVVEVDADETEHVMPTAVRLAAALVRDGDTVLLAPAAASMDQFSDYAERGRLFQAAVNEYLGGGADDGSSASRPGSGG.

143-149 (GTNGKTT) contacts ATP.

Belongs to the MurCDEF family.

It localises to the cytoplasm. The enzyme catalyses UDP-N-acetyl-alpha-D-muramoyl-L-alanine + D-glutamate + ATP = UDP-N-acetyl-alpha-D-muramoyl-L-alanyl-D-glutamate + ADP + phosphate + H(+). The protein operates within cell wall biogenesis; peptidoglycan biosynthesis. Cell wall formation. Catalyzes the addition of glutamate to the nucleotide precursor UDP-N-acetylmuramoyl-L-alanine (UMA). The protein is UDP-N-acetylmuramoylalanine--D-glutamate ligase of Leifsonia xyli subsp. xyli (strain CTCB07).